The primary structure comprises 462 residues: ATP synthase subunit beta (462 aa).

Residue 152–159 (GGAGVGKT) participates in ATP binding.

This sequence belongs to the ATPase alpha/beta chains family. In terms of assembly, F-type ATPases have 2 components, CF(1) - the catalytic core - and CF(0) - the membrane proton channel. CF(1) has five subunits: alpha(3), beta(3), gamma(1), delta(1), epsilon(1). CF(0) has three main subunits: a(1), b(2) and c(9-12). The alpha and beta chains form an alternating ring which encloses part of the gamma chain. CF(1) is attached to CF(0) by a central stalk formed by the gamma and epsilon chains, while a peripheral stalk is formed by the delta and b chains.

The protein resides in the cell inner membrane. It catalyses the reaction ATP + H2O + 4 H(+)(in) = ADP + phosphate + 5 H(+)(out). Produces ATP from ADP in the presence of a proton gradient across the membrane. The catalytic sites are hosted primarily by the beta subunits. This Aeromonas hydrophila subsp. hydrophila (strain ATCC 7966 / DSM 30187 / BCRC 13018 / CCUG 14551 / JCM 1027 / KCTC 2358 / NCIMB 9240 / NCTC 8049) protein is ATP synthase subunit beta.